We begin with the raw amino-acid sequence, 260 residues long: GTP cyclohydrolase FolE2 (260 aa).

This sequence belongs to the GTP cyclohydrolase IV family.

It catalyses the reaction GTP + H2O = 7,8-dihydroneopterin 3'-triphosphate + formate + H(+). The protein operates within cofactor biosynthesis; 7,8-dihydroneopterin triphosphate biosynthesis; 7,8-dihydroneopterin triphosphate from GTP: step 1/1. Its function is as follows. Converts GTP to 7,8-dihydroneopterin triphosphate. This is GTP cyclohydrolase FolE2 from Desulfosudis oleivorans (strain DSM 6200 / JCM 39069 / Hxd3) (Desulfococcus oleovorans).